The sequence spans 512 residues: MDAGRRRLVINDCMKPERGRRSPLPRRPTRPPDERSSGIGNLAMTPAKLHMTTSLAPIAVHSPYDGSLLGSVEATDPADIDRLLATARRGAEISRNLPRHKRASILEGAAQMVESRHDAFAEIIVREAGKTIVQARKEVLRCVNTLKLSAEEAKRNAGEIVPFDAYTGSEQRQGWFTRDPLGIITAITPYNDPLNLVAHKLGPAIAGGNAVMLKPSNLTPFSAIKLVGALREAGLPEEVITISHGDRELVTAMIAAREVRMVSFTGGFATGEAISRAAGLKKLAMELGGNAPVIVMNDCDFDKAVEGCVSGAFWAAGQNCIGAQRILIQSELYGRFRDAFVAATKKLKAGDPLQEDTDVGPMISKQVAERTEAAVNEAIKAGATLLCGNYREGSLYHPTVLEGTPLTCRLWHEEVFAPVVMLAPFDTLDKGIEMANDPDYSLHAGIFTNDLNVALEAANRIEVGGVMINDSSDYRFDAMPFGGFKYGSMGREGVRFAYEDMTQPKVVCINRG.

The segment at Met-14 to Asn-41 is disordered. NADP(+) is bound at residue Gly-266 to Gly-271. Active-site residues include Glu-286 and Cys-320.

Belongs to the aldehyde dehydrogenase family.

Its pathway is amino-acid degradation; 4-aminobutanoate degradation. In terms of biological role, could be a succinate-semialdehyde dehydrogenase (NADP(+)). This is Putative aldehyde-dehydrogenase-like protein y4uC from Sinorhizobium fredii (strain NBRC 101917 / NGR234).